Here is a 381-residue protein sequence, read N- to C-terminus: Complement decay-accelerating factor (381 aa).

The signal sequence occupies residues 1 to 34 (MTVARPSVPAALPLLGELPRLLLLVLLCLPAVWG). 4 consecutive Sushi domains span residues 35–96 (DCGL…FCNR), 96–160 (RSCE…FCKK), 161–222 (KSCP…ECRE), and 223–285 (IYCP…ECRG). Disulfide bonds link C36/C81 and C65/C94. N95 carries N-linked (GlcNAc...) asparagine glycosylation. Intrachain disulfides connect C98–C145, C129–C158, C163–C204, C190–C220, C225–C267, and C253–C283. The disordered stretch occupies residues 277-354 (SGPPPECRGK…PNKGSGTTSG (78 aa)). A compositionally biased stretch (polar residues) spans 287–309 (SLTSKVPPTVQKPTTVNVPTTEV). Low complexity predominate over residues 310-328 (SPTSQKTTTKTTTPNAQAT). Residue S353 is the site of GPI-anchor amidated serine attachment. Residues 354-381 (GTTRLLSGHTCFTLTGLLGTLVTMGLLT) constitute a propeptide, removed in mature form.

Belongs to the receptors of complement activation (RCA) family. As to quaternary structure, monomer (major form) and non-disulfide-linked, covalent homodimer (minor form). Interacts with ADGRE5. In terms of assembly, (Microbial infection) Interacts with coxsackievirus A21, coxsackieviruses B1, B3 and B5 capsid proteins. (Microbial infection) Interacts with human enterovirus 70 and D68 capsid proteins. As to quaternary structure, (Microbial infection) Interacts with human echoviruses 6, 7, 11, 12, 20 and 21 capsid proteins. In terms of processing, the Ser/Thr-rich domain is heavily O-glycosylated. As to expression, expressed on the plasma membranes of all cell types that are in intimate contact with plasma complement proteins. It is also found on the surfaces of epithelial cells lining extracellular compartments, and variants of the molecule are present in body fluids and in extracellular matrix.

The protein resides in the cell membrane. It is found in the secreted. This protein recognizes C4b and C3b fragments that condense with cell-surface hydroxyl or amino groups when nascent C4b and C3b are locally generated during C4 and c3 activation. Interaction of daf with cell-associated C4b and C3b polypeptides interferes with their ability to catalyze the conversion of C2 and factor B to enzymatically active C2a and Bb and thereby prevents the formation of C4b2a and C3bBb, the amplification convertases of the complement cascade. Inhibits complement activation by destabilizing and preventing the formation of C3 and C5 convertases, which prevents complement damage. In terms of biological role, (Microbial infection) Acts as a receptor for Coxsackievirus A21, coxsackieviruses B1, B3 and B5. Its function is as follows. (Microbial infection) Acts as a receptor for Human enterovirus 70 and D68. Functionally, (Microbial infection) Acts as a receptor for Human echoviruses 6, 7, 11, 12, 20 and 21. The sequence is that of Complement decay-accelerating factor (CD55) from Homo sapiens (Human).